We begin with the raw amino-acid sequence, 201 residues long: Small ribosomal subunit protein uS5 (201 aa).

The disordered stretch occupies residues 1 to 27; it reads MAGPQRRGSGAGGGERRDRKGRDGGAA. Residues 14-23 show a composition bias toward basic and acidic residues; sequence GERRDRKGRD. The 64-residue stretch at 34–97 folds into the S5 DRBM domain; the sequence is YVERVVAINR…EEAKKHFFKV (64 aa).

This sequence belongs to the universal ribosomal protein uS5 family. Part of the 30S ribosomal subunit. Contacts proteins S4 and S8.

Its function is as follows. With S4 and S12 plays an important role in translational accuracy. Located at the back of the 30S subunit body where it stabilizes the conformation of the head with respect to the body. The chain is Small ribosomal subunit protein uS5 from Streptomyces avermitilis (strain ATCC 31267 / DSM 46492 / JCM 5070 / NBRC 14893 / NCIMB 12804 / NRRL 8165 / MA-4680).